The chain runs to 229 residues: ADP-ribosylation factor-like protein 6-interacting protein 4 (229 aa).

The segment covering 1–20 has biased composition (basic residues); the sequence is MAHVGSRKRSRSRSRSRSGR. Positions 1 to 152 are disordered; that stretch reads MAHVGSRKRS…EDNDGPVLTD (152 aa). Residues 21–35 are compositionally biased toward basic and acidic residues; sequence RGSEKRSKRSSKDAS. A compositionally biased stretch (low complexity) spans 66 to 87; the sequence is SRSSSTSSSSSSSSSASSSSSS. Over residues 90–117 the composition is skewed to basic residues; it reads RKKRAKHKEKKRKKKKKKRKKKLKKRVK. A phosphoserine mark is found at Ser-140 and Ser-174. Lys-191 is covalently cross-linked (Glycyl lysine isopeptide (Lys-Gly) (interchain with G-Cter in SUMO2)).

This sequence belongs to the ARL6IP4 family. Interacts with ZCCHC17. Interacts with SRSF2. Interacts with ARL6. As to expression, widely expressed. Expressed at high level in testis and thymus.

Its subcellular location is the nucleus. The protein localises to the nucleolus. The protein resides in the nucleus speckle. In terms of biological role, involved in modulating alternative pre-mRNA splicing with either 5' distal site activation or preferential use of 3' proximal site. In Mus musculus (Mouse), this protein is ADP-ribosylation factor-like protein 6-interacting protein 4 (Arl6ip4).